A 577-amino-acid chain; its full sequence is E3 ubiquitin protein ligase RIN3 (577 aa).

The next 6 membrane-spanning stretches (helical) occupy residues 3–23 (ITYL…LQVW), 58–78 (TTIA…VLSL), 120–140 (GVLW…QALA), 162–182 (YSAL…SLMI), 191–211 (YLLL…ALLI), and 272–292 (YLHI…VLFL). An RING-type; atypical zinc finger spans residues 337 to 379 (CAICREPMAKAKRLHCNHLFHLGCLRSWLDQGLNEVYSCPTCR). One can recognise a CUE domain in the interval 537–577 (SILAMAETVREVLPHVPDEIIFQDLQRTNSVSVTVNNLLQM).

As to quaternary structure, interacts (via C-terminus) with RPM1 (via N-terminus).

It is found in the membrane. It catalyses the reaction S-ubiquitinyl-[E2 ubiquitin-conjugating enzyme]-L-cysteine + [acceptor protein]-L-lysine = [E2 ubiquitin-conjugating enzyme]-L-cysteine + N(6)-ubiquitinyl-[acceptor protein]-L-lysine.. Its pathway is protein modification; protein ubiquitination. Functionally, E3 ubiquitin protein ligase that acts as a positive regulator of RPM1- and RPS2-dependent hypersensitive response (HR), in association with RIN2. Probably not required for RPM1 degradation during HR. The chain is E3 ubiquitin protein ligase RIN3 (RIN3) from Arabidopsis thaliana (Mouse-ear cress).